The following is a 678-amino-acid chain: Putative cyclic nucleotide-gated ion channel 15 (678 aa).

Over 1 to 81 (MGYGNSRSVR…RGQTIRRWNK (81 aa)) the chain is Cytoplasmic. A helical transmembrane segment spans residues 82-102 (IFLIACLVSLFVDPLFFFLPV). Residues 103-115 (MRNEACITIGVRL) lie on the Extracellular side of the membrane. Residues 116-136 (EVVLTLIRSLADAFYIAQILI) form a helical membrane-spanning segment. Over 137 to 170 (RFRTAYIAPPSRVFGRGELVIDSRKIAWRYLHKS) the chain is Cytoplasmic. A helical transmembrane segment spans residues 171 to 191 (FWIHLVAALPLPQVLIWIIIP). Over 192–203 (NLRGSPMTNTKN) the chain is Extracellular. A helical transmembrane segment spans residues 204–224 (VLRFIIIFQYVPRMFLIFPLS). The Cytoplasmic portion of the chain corresponds to 225–245 (RQIIKATGVVTETAWAGAAYN). A helical membrane pass occupies residues 246-266 (LMLYMLASHVLGACWYLLAVE). The Extracellular segment spans residues 267–364 (RQEACWRHAC…GQNLATSTYA (98 aa)). A helical membrane pass occupies residues 365–385 (GEILFAIIIATLGLVLFALLI). The Cytoplasmic segment spans residues 386-678 (GNMQTYLQST…KPVEPDFSSE (293 aa)). A nucleoside 3',5'-cyclic phosphate is bound by residues 471-595 (LFDQ…TKQL) and glutamate 542. A calmodulin-binding region spans residues 587–602 (FRRLHTKQLRHKFRFY). One can recognise an IQ domain in the interval 607–638 (RTWAACFIQAAWRRHRKRKYKTELRAKEEFHY). Over residues 656–668 (RSGSDSGMMSSIQ) the composition is skewed to polar residues. The segment at 656–678 (RSGSDSGMMSSIQKPVEPDFSSE) is disordered.

It belongs to the cyclic nucleotide-gated cation channel (TC 1.A.1.5) family. In terms of assembly, homotetramer or heterotetramer.

The protein resides in the cell membrane. In terms of biological role, putative cyclic nucleotide-gated ion channel. The chain is Putative cyclic nucleotide-gated ion channel 15 (CNGC15) from Arabidopsis thaliana (Mouse-ear cress).